The sequence spans 103 residues: Large ribosomal subunit protein uL24 (103 aa).

This sequence belongs to the universal ribosomal protein uL24 family. As to quaternary structure, part of the 50S ribosomal subunit.

In terms of biological role, one of two assembly initiator proteins, it binds directly to the 5'-end of the 23S rRNA, where it nucleates assembly of the 50S subunit. Its function is as follows. One of the proteins that surrounds the polypeptide exit tunnel on the outside of the subunit. The polypeptide is Large ribosomal subunit protein uL24 (Geobacillus stearothermophilus (Bacillus stearothermophilus)).